A 482-amino-acid polypeptide reads, in one-letter code: Cysteine--tRNA ligase (482 aa).

C28 lines the Zn(2+) pocket. The 'HIGH' region signature appears at 30-40 (PTVYNFLHVGN). 3 residues coordinate Zn(2+): C208, H233, and E237. The 'KMSKS' region signature appears at 265–269 (KMSKS). Residue K268 participates in ATP binding.

This sequence belongs to the class-I aminoacyl-tRNA synthetase family. As to quaternary structure, monomer. It depends on Zn(2+) as a cofactor.

It is found in the cytoplasm. It carries out the reaction tRNA(Cys) + L-cysteine + ATP = L-cysteinyl-tRNA(Cys) + AMP + diphosphate. The sequence is that of Cysteine--tRNA ligase from Bdellovibrio bacteriovorus (strain ATCC 15356 / DSM 50701 / NCIMB 9529 / HD100).